A 125-amino-acid chain; its full sequence is Large ribosomal subunit protein bL12 (125 aa).

It belongs to the bacterial ribosomal protein bL12 family. As to quaternary structure, homodimer. Part of the ribosomal stalk of the 50S ribosomal subunit. Forms a multimeric L10(L12)X complex, where L10 forms an elongated spine to which 2 to 4 L12 dimers bind in a sequential fashion. Binds GTP-bound translation factors.

Functionally, forms part of the ribosomal stalk which helps the ribosome interact with GTP-bound translation factors. Is thus essential for accurate translation. The protein is Large ribosomal subunit protein bL12 of Mannheimia succiniciproducens (strain KCTC 0769BP / MBEL55E).